Here is a 456-residue protein sequence, read N- to C-terminus: Histidine--tRNA ligase (456 aa).

The protein belongs to the class-II aminoacyl-tRNA synthetase family. As to quaternary structure, homodimer.

The protein resides in the cytoplasm. The catalysed reaction is tRNA(His) + L-histidine + ATP = L-histidyl-tRNA(His) + AMP + diphosphate + H(+). The sequence is that of Histidine--tRNA ligase from Borreliella afzelii (strain PKo) (Borrelia afzelii).